The sequence spans 250 residues: Probable aquaporin TIP-type RB7-18C (250 aa).

Transmembrane regions (helical) follow at residues 20–42 (AYVAEFIATLLFVFAGVGSAIAY) and 55–77 (GLVAVAVAHAFALFVGVSIAANI). The NPA 1 motif lies at 83–85 (NPA). Transmembrane regions (helical) follow at residues 97-119 (TILTGFFYWIAQLLGSTVACLLL), 140-162 (FQGVVMEIIITFALVYTVYATAA), and 172-194 (IAPIAIGFIVGANILAAGPFSGG). The NPA 2 signature appears at 197 to 199 (NPA). A helical transmembrane segment spans residues 215–237 (WIYWAGPLIGGGLAGFIYGDVFI).

The protein belongs to the MIP/aquaporin (TC 1.A.8) family. TIP (TC 1.A.8.10) subfamily. As to expression, roots.

Its subcellular location is the vacuole membrane. Its function is as follows. Channel protein in tonoplast. These proteins may allow the diffusion of amino acids and/or peptides from the vacuolar compartment to the cytoplasm. This is Probable aquaporin TIP-type RB7-18C from Nicotiana tabacum (Common tobacco).